We begin with the raw amino-acid sequence, 215 residues long: UPF0502 protein YceH (215 aa).

The protein belongs to the UPF0502 family.

In Salmonella schwarzengrund (strain CVM19633), this protein is UPF0502 protein YceH.